We begin with the raw amino-acid sequence, 504 residues long: Maturase K (504 aa).

This sequence belongs to the intron maturase 2 family. MatK subfamily.

The protein resides in the plastid. It localises to the chloroplast. Usually encoded in the trnK tRNA gene intron. Probably assists in splicing its own and other chloroplast group II introns. The chain is Maturase K from Eichhornia crassipes (Water hyacinth).